The primary structure comprises 141 residues: Large ribosomal subunit protein uL16 (141 aa).

Belongs to the universal ribosomal protein uL16 family. Part of the 50S ribosomal subunit.

Functionally, binds 23S rRNA and is also seen to make contacts with the A and possibly P site tRNAs. This is Large ribosomal subunit protein uL16 from Campylobacter jejuni subsp. jejuni serotype O:6 (strain 81116 / NCTC 11828).